The following is a 643-amino-acid chain: Threonine--tRNA ligase (643 aa).

The TGS domain occupies 1–61; the sequence is MIKITLKDGS…NEDSSLEICT (61 aa). A catalytic region spans residues 240 to 540; it reads DHNKLGRELG…LIEKYAGALP (301 aa). 3 residues coordinate Zn(2+): Cys335, His386, and His517.

This sequence belongs to the class-II aminoacyl-tRNA synthetase family. As to quaternary structure, homodimer. Requires Zn(2+) as cofactor.

The protein resides in the cytoplasm. It carries out the reaction tRNA(Thr) + L-threonine + ATP = L-threonyl-tRNA(Thr) + AMP + diphosphate + H(+). Catalyzes the attachment of threonine to tRNA(Thr) in a two-step reaction: L-threonine is first activated by ATP to form Thr-AMP and then transferred to the acceptor end of tRNA(Thr). Also edits incorrectly charged L-seryl-tRNA(Thr). The sequence is that of Threonine--tRNA ligase from Clostridium perfringens (strain ATCC 13124 / DSM 756 / JCM 1290 / NCIMB 6125 / NCTC 8237 / Type A).